A 179-amino-acid chain; its full sequence is UPF0227 protein Shew185_2404 (179 aa).

This sequence belongs to the UPF0227 family.

In Shewanella baltica (strain OS185), this protein is UPF0227 protein Shew185_2404.